The following is a 96-amino-acid chain: Large ribosomal subunit protein uL23cz (96 aa).

Belongs to the universal ribosomal protein uL23 family. As to quaternary structure, part of the 50S ribosomal subunit.

The protein localises to the plastid. It localises to the chloroplast. Binds to 23S rRNA. This chain is Large ribosomal subunit protein uL23cz (rpl23-A), found in Sorghum bicolor (Sorghum).